An 881-amino-acid polypeptide reads, in one-letter code: Lon protease (881 aa).

The segment covering 1-24 has biased composition (basic and acidic residues); that stretch reads MAKNTDIEHDAHEPAGHGDVRESA. The disordered stretch occupies residues 1–77; sequence MAKNTDIEHD…RAGEAEKGVP (77 aa). Residues 49 to 59 show a composition bias toward polar residues; that stretch reads QTDTESAQGAA. Residues 65-77 are compositionally biased toward basic and acidic residues; that stretch reads EVQRAGEAEKGVP. Residues 94–287 form the Lon N-terminal domain; it reads VHLIPLTGRP…EVFVYIKKEK (194 aa). 440 to 447 contacts ATP; it reads GPPGVGKT. In terms of domain architecture, Lon proteolytic spans 679–861; the sequence is ANKVGTAVGL…EEVLSLAFPK (183 aa). Catalysis depends on residues Ser767 and Lys810.

It belongs to the peptidase S16 family. As to quaternary structure, homohexamer. Organized in a ring with a central cavity.

The protein localises to the cytoplasm. It carries out the reaction Hydrolysis of proteins in presence of ATP.. Its function is as follows. ATP-dependent serine protease that mediates the selective degradation of mutant and abnormal proteins as well as certain short-lived regulatory proteins. Required for cellular homeostasis and for survival from DNA damage and developmental changes induced by stress. Degrades polypeptides processively to yield small peptide fragments that are 5 to 10 amino acids long. Binds to DNA in a double-stranded, site-specific manner. The protein is Lon protease of Treponema pallidum (strain Nichols).